Reading from the N-terminus, the 353-residue chain is Protein MGF 360-11L (353 aa).

The stretch at 59 to 88 is one ANK repeat; it reads ELNTVLMKAAKENNHDLIRLFVEWGADINY.

Belongs to the asfivirus MGF 360 family. In terms of assembly, interacts with host TBK1 ad IRF7.

Its function is as follows. Plays a role in virus cell tropism, and may be required for efficient virus replication in macrophages. In addition, inhibits the phosphorylation of host TBK1 and IRF7 and thereby negatively regulates the host cGAS signaling pathway and antagonizes IFN-mediated antiviral activity. The polypeptide is Protein MGF 360-11L (African swine fever virus (isolate Pig/Kenya/KEN-50/1950) (ASFV)).